The sequence spans 349 residues: Phosphate acyltransferase (349 aa).

Belongs to the PlsX family. Homodimer. Probably interacts with PlsY.

Its subcellular location is the cytoplasm. It catalyses the reaction a fatty acyl-[ACP] + phosphate = an acyl phosphate + holo-[ACP]. The protein operates within lipid metabolism; phospholipid metabolism. Functionally, catalyzes the reversible formation of acyl-phosphate (acyl-PO(4)) from acyl-[acyl-carrier-protein] (acyl-ACP). This enzyme utilizes acyl-ACP as fatty acyl donor, but not acyl-CoA. In Colwellia psychrerythraea (strain 34H / ATCC BAA-681) (Vibrio psychroerythus), this protein is Phosphate acyltransferase.